A 440-amino-acid polypeptide reads, in one-letter code: NADH-quinone oxidoreductase subunit D 1 (440 aa).

The protein belongs to the complex I 49 kDa subunit family. As to quaternary structure, NDH-1 is composed of 14 different subunits. Subunits NuoB, C, D, E, F, and G constitute the peripheral sector of the complex.

The protein localises to the cell inner membrane. The enzyme catalyses a quinone + NADH + 5 H(+)(in) = a quinol + NAD(+) + 4 H(+)(out). Functionally, NDH-1 shuttles electrons from NADH, via FMN and iron-sulfur (Fe-S) centers, to quinones in the respiratory chain. The immediate electron acceptor for the enzyme in this species is believed to be a menaquinone. Couples the redox reaction to proton translocation (for every two electrons transferred, four hydrogen ions are translocated across the cytoplasmic membrane), and thus conserves the redox energy in a proton gradient. This Chloroherpeton thalassium (strain ATCC 35110 / GB-78) protein is NADH-quinone oxidoreductase subunit D 1.